We begin with the raw amino-acid sequence, 633 residues long: MGKIIGIDLGTTNSCVSVMEGGEPKVIANVEGNRTTPSVVAFADNDERLVGMIAKRQAVTNPERTVYAAKRLIGRKFTDAEVQRSQEVSPFDIVEGISGSVAIQVEGHKYRPAEISAMVLGKMKQTAEEYLGEEVTEAVVTVPAYFNDSQRQATKDAGKIAGLDVKRIINEPTAASLAYGLDKKVEEKIAVFDLGGGTFDVSVLEIGDGVFEVKSTNGDTFLGGEDFDMRIVHWLADEFKREQGIDLRSDKMALQRLKEEAEKAKMELSTTVETDINLPFITADASGPKHLNIKLSRSKFETLVEDLVERTVGPCKTALKDAGLSASQIDEVILVGGMSRMPMVQKKVVEIFGKEPHKGVNPDEVVAIGAAIQGGVLQGDVKDVLLLDVTPLSLGIETLGGVTTKLIEKNTTVPTKKSQVFSTAADNQPAVSIHVLQGEREMAEGNKTIGRFELADIPTAPRGVPQIEVTFDLDANGILNVSAKDMGTGKEQSIKITASSGLTDEEIDRMTKDAELHADEDKKRKELVEARNSADGLIHSTEKTLKDLGDKVDAETKENVEKEIANVKTALEGDDVEAIKAAIEALTAASHKLAELMYQQASQETPGDGDAGAAGAKKKDDDDVVDADYEEVK.

Threonine 198 is modified (phosphothreonine; by autocatalysis). A disordered region spans residues 599–633 (QQASQETPGDGDAGAAGAKKKDDDDVVDADYEEVK). The span at 622–633 (DDVVDADYEEVK) shows a compositional bias: acidic residues.

This sequence belongs to the heat shock protein 70 family.

Its function is as follows. Acts as a chaperone. In Desulfotalea psychrophila (strain LSv54 / DSM 12343), this protein is Chaperone protein DnaK.